A 177-amino-acid chain; its full sequence is ATP synthase subunit b (177 aa).

A helical transmembrane segment spans residues 16-36 (HLLLANMIVTIVVFLLLLILL).

This sequence belongs to the ATPase B chain family. In terms of assembly, F-type ATPases have 2 components, F(1) - the catalytic core - and F(0) - the membrane proton channel. F(1) has five subunits: alpha(3), beta(3), gamma(1), delta(1), epsilon(1). F(0) has three main subunits: a(1), b(2) and c(10-14). The alpha and beta chains form an alternating ring which encloses part of the gamma chain. F(1) is attached to F(0) by a central stalk formed by the gamma and epsilon chains, while a peripheral stalk is formed by the delta and b chains.

Its subcellular location is the cell membrane. F(1)F(0) ATP synthase produces ATP from ADP in the presence of a proton or sodium gradient. F-type ATPases consist of two structural domains, F(1) containing the extramembraneous catalytic core and F(0) containing the membrane proton channel, linked together by a central stalk and a peripheral stalk. During catalysis, ATP synthesis in the catalytic domain of F(1) is coupled via a rotary mechanism of the central stalk subunits to proton translocation. Its function is as follows. Component of the F(0) channel, it forms part of the peripheral stalk, linking F(1) to F(0). In Exiguobacterium sibiricum (strain DSM 17290 / CCUG 55495 / CIP 109462 / JCM 13490 / 255-15), this protein is ATP synthase subunit b.